Reading from the N-terminus, the 595-residue chain is MDTLHHRFQQFQKTIWFNIFCYLWTGIFSFLAFAPVSLTHFVWIAPFGFFWLSLKYHGKYKKLFFHGLLIGVVFYAISFHWIIHMAITFGNFPYVVAILILLFAGLLFGLKFPIFMMSFSFLSGKIGRHSVWVAGFCGLLSELIGPQLFPWYWGNLAAGNIILAQNAEITGVYGISFLVFIVSYTLFQSNPWHWKEIIHSKEKRKQYLRFITLPALLLLTFIVSGIFLFKKWENVKPVKSLNVLIVQPDAPLSFRDGREIKESIEALMARIEKLTDEGAVRLGKKPDLIVLPEAGVPFFSAHKTEITTKVRRMYWDRFDSLMFLLANRYKANVFFNEIDAGFKGAPSPRNLRYYNNNVLYDPNGDRRDSYQKKFLLMFGEYMPFDFLYELSQQTGRFEPGLTHNLIRYYTPRYYTLAEKEKSPKGRHLGWTDTETFNHEAVRSYYETTRTEVSETGKFLPLICYEVILPEFVREFRTAGNPEFIVNLTNDKWYGATTESDQHMELGRLRSIELRRWMVRSTNSGISANIDHLGRFVGNKKTGLMTAEALSETIDVIDSPPTFYTQYGNLIPWLMLFLTGIYYLNLLIGIRRGKSA.

5 helical membrane passes run F30–F50, L63–I83, V95–F115, A167–F187, and F210–K230. One can recognise a CN hydrolase domain in the interval L241–V555. The Proton acceptor role is filled by E293. K372 is an active-site residue. C463 (nucleophile) is an active-site residue. The chain crosses the membrane as a helical span at residues L569–I589.

It belongs to the CN hydrolase family. Apolipoprotein N-acyltransferase subfamily.

The protein resides in the cell inner membrane. The enzyme catalyses N-terminal S-1,2-diacyl-sn-glyceryl-L-cysteinyl-[lipoprotein] + a glycerophospholipid = N-acyl-S-1,2-diacyl-sn-glyceryl-L-cysteinyl-[lipoprotein] + a 2-acyl-sn-glycero-3-phospholipid + H(+). Its pathway is protein modification; lipoprotein biosynthesis (N-acyl transfer). In terms of biological role, catalyzes the phospholipid dependent N-acylation of the N-terminal cysteine of apolipoprotein, the last step in lipoprotein maturation. The chain is Apolipoprotein N-acyltransferase 2 from Leptospira interrogans serogroup Icterohaemorrhagiae serovar Lai (strain 56601).